Reading from the N-terminus, the 80-residue chain is Metallothionein-like protein type 2, MT2-28 (80 aa).

It belongs to the metallothionein superfamily. Type 15 family.

Its function is as follows. Metallothioneins have a high content of cysteine residues that bind various heavy metals. This Brassica juncea (Indian mustard) protein is Metallothionein-like protein type 2, MT2-28.